A 278-amino-acid chain; its full sequence is 4-deoxy-L-threo-5-hexosulose-uronate ketol-isomerase (278 aa).

Residues H196, H198, E203, and H245 each coordinate Zn(2+).

The protein belongs to the KduI family. Homohexamer. Requires Zn(2+) as cofactor.

It catalyses the reaction 5-dehydro-4-deoxy-D-glucuronate = 3-deoxy-D-glycero-2,5-hexodiulosonate. The protein operates within glycan metabolism; pectin degradation; 2-dehydro-3-deoxy-D-gluconate from pectin: step 4/5. Its function is as follows. Catalyzes the isomerization of 5-dehydro-4-deoxy-D-glucuronate to 3-deoxy-D-glycero-2,5-hexodiulosonate. In Escherichia coli O8 (strain IAI1), this protein is 4-deoxy-L-threo-5-hexosulose-uronate ketol-isomerase.